Consider the following 551-residue polypeptide: Membrane protein insertase YidC (551 aa).

The chain crosses the membrane as a helical span at residues 3-23 (ANHIRILLLVTIAIMLISLMG). Low complexity predominate over residues 30-43 (PSNSSQSQTTQTQQ). Residues 30-61 (PSNSSQSQTTQTQQDNSHYNSDTPATTNVSTS) form a disordered region. A compositionally biased stretch (polar residues) spans 44–61 (DNSHYNSDTPATTNVSTS). The next 3 membrane-spanning stretches (helical) occupy residues 361-381 (LVGN…LIFY), 431-451 (LSGC…YWVL), and 504-524 (IMMF…SGLV).

It belongs to the OXA1/ALB3/YidC family. Type 1 subfamily. In terms of assembly, interacts with the Sec translocase complex via SecD. Specifically interacts with transmembrane segments of nascent integral membrane proteins during membrane integration.

The protein localises to the cell inner membrane. Functionally, required for the insertion and/or proper folding and/or complex formation of integral membrane proteins into the membrane. Involved in integration of membrane proteins that insert both dependently and independently of the Sec translocase complex, as well as at least some lipoproteins. Aids folding of multispanning membrane proteins. The protein is Membrane protein insertase YidC of Francisella philomiragia subsp. philomiragia (strain ATCC 25017 / CCUG 19701 / FSC 153 / O#319-036).